The following is a 1679-amino-acid chain: Maestro heat-like repeat-containing protein family member 2A (1679 aa).

HEAT repeat units lie at residues 68-91, 92-128, 190-229, 293-313, 314-350, 380-417, 422-459, 571-610, 614-654, 737-774, 848-887, 991-1028, 1219-1261, 1387-1425, and 1632-1669; these read ATTDPCVVMNALIRCLQMPEISTQ, RKMNIYNIMQEIIQQEGEMEEHCIQRLVAIASKQMRD, MPYMGITLATIFTMLRLANEAKMRQVICSAMETFCETVQF, EQVYDYIPLLLAEFQGTGHWP, LFPSLLQVLRQILEASVTTNTPIPPMLLHPIFTELHV, SYPKELMKFFFSQVEMSKEAVRVGTLALIRAVVSADDP, KTIYLAIRVVKNTLSDTRSKVRMAILRIIGQLVLSGFQ, PAPQKLLARLLVLMSSPYKGEGRGIAMLNLLRTLSQSIAP, DMWE…SLKK, KTVLNVLQDFEERIQESEQSWQIGAWRKDHPWRRETVK, SALTGLIVVIIKAEPPDHLVSPVRSMAMDALSQLSTMKPF, GQFGVLVGLIAPCTCDAHRRTRLASINVLSSLLDLHVS, DPLM…SHGP, KLLRPVVLMLEKGAGQDKDETLQVLSLRALGNMALGAPR, and MDLVGLRNSLQDLQLDSDAGVRRAALETLKVLDSCNQH.

This Mus musculus (Mouse) protein is Maestro heat-like repeat-containing protein family member 2A (Mroh2a).